Consider the following 312-residue polypeptide: tRNA uridine(34) hydroxylase (312 aa).

The Rhodanese domain maps to 130–225 (RGDEVVFFDG…YGEQFGNKGL (96 aa)). The active-site Cysteine persulfide intermediate is Cys185.

The protein belongs to the TrhO family.

The enzyme catalyses uridine(34) in tRNA + AH2 + O2 = 5-hydroxyuridine(34) in tRNA + A + H2O. Catalyzes oxygen-dependent 5-hydroxyuridine (ho5U) modification at position 34 in tRNAs. In Corynebacterium glutamicum (strain R), this protein is tRNA uridine(34) hydroxylase.